The sequence spans 422 residues: UDP-N-acetylmuramoylalanine--D-glutamate ligase (422 aa).

102-108 (GTNGKTT) contacts ATP.

The protein belongs to the MurCDEF family.

Its subcellular location is the cytoplasm. It catalyses the reaction UDP-N-acetyl-alpha-D-muramoyl-L-alanine + D-glutamate + ATP = UDP-N-acetyl-alpha-D-muramoyl-L-alanyl-D-glutamate + ADP + phosphate + H(+). Its pathway is cell wall biogenesis; peptidoglycan biosynthesis. Functionally, cell wall formation. Catalyzes the addition of glutamate to the nucleotide precursor UDP-N-acetylmuramoyl-L-alanine (UMA). The polypeptide is UDP-N-acetylmuramoylalanine--D-glutamate ligase (Helicobacter pylori (strain J99 / ATCC 700824) (Campylobacter pylori J99)).